The sequence spans 140 residues: Nucleoside diphosphate kinase (140 aa).

The ATP site is built by K11, F59, R87, T93, R104, and N114. Residue H117 is the Pros-phosphohistidine intermediate of the active site.

It belongs to the NDK family. In terms of assembly, homotetramer. Mg(2+) serves as cofactor.

The protein localises to the cytoplasm. The enzyme catalyses a 2'-deoxyribonucleoside 5'-diphosphate + ATP = a 2'-deoxyribonucleoside 5'-triphosphate + ADP. The catalysed reaction is a ribonucleoside 5'-diphosphate + ATP = a ribonucleoside 5'-triphosphate + ADP. Functionally, major role in the synthesis of nucleoside triphosphates other than ATP. The ATP gamma phosphate is transferred to the NDP beta phosphate via a ping-pong mechanism, using a phosphorylated active-site intermediate. This chain is Nucleoside diphosphate kinase, found in Maricaulis maris (strain MCS10) (Caulobacter maris).